A 523-amino-acid chain; its full sequence is Anthranilate synthase component 1 (523 aa).

L-tryptophan-binding positions include Ser-45 and 296–298 (PYM). Residue 333–334 (GT) participates in chorismate binding. Glu-366 contributes to the Mg(2+) binding site. Chorismate contacts are provided by residues Tyr-454, Arg-474, 488–490 (GAG), and Gly-490. Glu-503 contacts Mg(2+).

The protein belongs to the anthranilate synthase component I family. In terms of assembly, heterotetramer consisting of two non-identical subunits: a beta subunit (TrpG) and a large alpha subunit (TrpE). Mg(2+) serves as cofactor.

The enzyme catalyses chorismate + L-glutamine = anthranilate + pyruvate + L-glutamate + H(+). The protein operates within amino-acid biosynthesis; L-tryptophan biosynthesis; L-tryptophan from chorismate: step 1/5. With respect to regulation, feedback inhibited by tryptophan. Its function is as follows. Part of a heterotetrameric complex that catalyzes the two-step biosynthesis of anthranilate, an intermediate in the biosynthesis of L-tryptophan. In the first step, the glutamine-binding beta subunit (TrpG) of anthranilate synthase (AS) provides the glutamine amidotransferase activity which generates ammonia as a substrate that, along with chorismate, is used in the second step, catalyzed by the large alpha subunit of AS (TrpE) to produce anthranilate. In the absence of TrpG, TrpE can synthesize anthranilate directly from chorismate and high concentrations of ammonia. In Vibrio cholerae serotype O1 (strain ATCC 39315 / El Tor Inaba N16961), this protein is Anthranilate synthase component 1 (trpE).